Here is a 237-residue protein sequence, read N- to C-terminus: Large ribosomal subunit protein uL22m (237 aa).

Belongs to the universal ribosomal protein uL22 family.

The protein resides in the mitochondrion. This is Large ribosomal subunit protein uL22m (mrpl22) from Dictyostelium discoideum (Social amoeba).